Here is a 255-residue protein sequence, read N- to C-terminus: Small ribosomal subunit protein eS1 (255 aa).

Residues 1–18 show a composition bias toward basic residues; sequence MAVGKNKRLSKGKKGLKK. The disordered stretch occupies residues 1–28; the sequence is MAVGKNKRLSKGKKGLKKRTQDPFSRKD. Ala-2 is modified (N-acetylalanine; partial). Basic and acidic residues predominate over residues 19 to 28; sequence RTQDPFSRKD.

Belongs to the eukaryotic ribosomal protein eS1 family. Component of the small ribosomal subunit. Mature ribosomes consist of a small (40S) and a large (60S) subunit. The 40S subunit contains about 33 different proteins and 1 molecule of RNA (18S). The 60S subunit contains about 49 different proteins and 3 molecules of RNA (25S, 5.8S and 5S).

The protein localises to the cytoplasm. The sequence is that of Small ribosomal subunit protein eS1 from Ajellomyces capsulatus (strain H143) (Darling's disease fungus).